The following is a 348-amino-acid chain: Killer cell immunoglobulin-like receptor 2DL1 (348 aa).

The N-terminal stretch at 1–21 (MSLLVVSMACVGFFLLQGAWP) is a signal peptide. Topologically, residues 22–245 (HEGVHRKPSL…SKTGNPRHLH (224 aa)) are extracellular. Ig-like C2-type domains lie at 42–107 (EETV…VTHS) and 142–205 (GENV…FHDS). An intrachain disulfide couples C49 to C100. Residues N67, N84, N144, and N178 are each glycosylated (N-linked (GlcNAc...) asparagine). A disulfide bond links C149 and C198. A disordered region spans residues 220-239 (VTGNPSNSWPSPTEPSSKTG). A helical transmembrane segment spans residues 246 to 264 (ILIGTSVVIILFILLFFLL). The Cytoplasmic portion of the chain corresponds to 265–348 (HRWCSNKKNA…ESRSKVVSCP (84 aa)).

This sequence belongs to the immunoglobulin superfamily. As to quaternary structure, interacts with ARRB2. Interacts with PTPN6; the interaction is enhanced by ARRB2. Interacts with PTPN11; the interaction is enhanced by ARRB2. Expressed by NK cells.

It is found in the cell membrane. In terms of biological role, receptor on natural killer (NK) cells for some HLA-C alleles such as w4 and w6. Inhibits the activity of NK cells thus preventing cell lysis. The sequence is that of Killer cell immunoglobulin-like receptor 2DL1 from Homo sapiens (Human).